A 159-amino-acid chain; its full sequence is Capsid protein (159 aa).

This sequence belongs to the virgaviridae capsid protein family.

Its subcellular location is the virion. Capsid protein self-assembles to form rod-shaped virions about 18 nm in diameter with a central canal enclosing the viral genomic RNA. This chain is Capsid protein (CP), found in Tobacco mild green mosaic virus (TMGMV).